A 117-amino-acid chain; its full sequence is MKEFHKINLLNDYYGSLLTERQQNFIELYYGEDLSLGEIAEQYNVTRQAVHDTLKRAEQTLTNYEEKLGLVSKFSQESKSLVEVINLLDGYESGEAPEGLEKSKGILKKILEKRQDL.

This sequence belongs to the UPF0122 family.

Functionally, might take part in the signal recognition particle (SRP) pathway. This is inferred from the conservation of its genetic proximity to ftsY/ffh. May be a regulatory protein. The chain is UPF0122 protein Dred_2057 from Desulforamulus reducens (strain ATCC BAA-1160 / DSM 100696 / MI-1) (Desulfotomaculum reducens).